The chain runs to 600 residues: UvrABC system protein C (600 aa).

Residues 15–92 enclose the GIY-YIG domain; the sequence is DKPGCYLMKD…IKKYQPYYNV (78 aa). The 36-residue stretch at 197 to 232 folds into the UVR domain; that stretch reads SQVKQDLTEKMTQASMNLEFERAAEFRDQLKYIEQT.

The protein belongs to the UvrC family. Interacts with UvrB in an incision complex.

It is found in the cytoplasm. Its function is as follows. The UvrABC repair system catalyzes the recognition and processing of DNA lesions. UvrC both incises the 5' and 3' sides of the lesion. The N-terminal half is responsible for the 3' incision and the C-terminal half is responsible for the 5' incision. The polypeptide is UvrABC system protein C (Lactobacillus gasseri (strain ATCC 33323 / DSM 20243 / BCRC 14619 / CIP 102991 / JCM 1131 / KCTC 3163 / NCIMB 11718 / NCTC 13722 / AM63)).